The primary structure comprises 999 residues: Hypoxia up-regulated protein 1 (999 aa).

Residues 1–32 form the signal peptide; it reads MAATVRRQRPRRLLCWTLVAVLLADLLALSDT. N-linked (GlcNAc...) asparagine glycans are attached at residues asparagine 155, asparagine 222, and asparagine 515. The segment at 564–694 is disordered; the sequence is VEDSPEEEST…KKQKPARKQK (131 aa). Residue serine 567 is modified to Phosphoserine. Polar residues predominate over residues 574-583; that stretch reads LTKLGNTISS. Residue asparagine 596 is glycosylated (N-linked (GlcNAc...) asparagine). Composition is skewed to basic and acidic residues over residues 611-626 and 641-670; these read GSKD…KEET and PKGD…EEKG. N-linked (GlcNAc...) asparagine glycans are attached at residues asparagine 830, asparagine 862, and asparagine 869. Lysine 883 is modified (N6-acetyllysine). Positions 909–999 are disordered; the sequence is AKFTKPRPRP…QKRSSKNDEL (91 aa). 2 N-linked (GlcNAc...) asparagine glycosylation sites follow: asparagine 922 and asparagine 931. Basic and acidic residues predominate over residues 949–962; that stretch reads EEAKPILEPDKEET. Positions 996–999 match the Prevents secretion from ER motif; sequence NDEL.

This sequence belongs to the heat shock protein 70 family. In terms of assembly, part of a large chaperone multiprotein complex comprising DNAJB11, HSP90B1, HSPA5, HYOU, PDIA2, PDIA4, PDIA6, PPIB, SDF2L1, UGGT1 and very small amounts of ERP29, but not, or at very low levels, CALR nor CANX.

The protein resides in the endoplasmic reticulum lumen. Functionally, has a pivotal role in cytoprotective cellular mechanisms triggered by oxygen deprivation. Promotes HSPA5/BiP-mediated ATP nucleotide exchange and thereby activates the unfolded protein response (UPR) pathway in the presence of endoplasmic reticulum stress. May play a role as a molecular chaperone and participate in protein folding. This is Hypoxia up-regulated protein 1 (HYOU1) from Cricetulus griseus (Chinese hamster).